Here is a 156-residue protein sequence, read N- to C-terminus: Small ribosomal subunit protein uS7 (156 aa).

The protein belongs to the universal ribosomal protein uS7 family. Part of the 30S ribosomal subunit. Contacts proteins S9 and S11.

Its function is as follows. One of the primary rRNA binding proteins, it binds directly to 16S rRNA where it nucleates assembly of the head domain of the 30S subunit. Is located at the subunit interface close to the decoding center, probably blocks exit of the E-site tRNA. The protein is Small ribosomal subunit protein uS7 of Bacillus mycoides (strain KBAB4) (Bacillus weihenstephanensis).